The chain runs to 318 residues: Glycine--tRNA ligase alpha subunit (318 aa).

The protein belongs to the class-II aminoacyl-tRNA synthetase family. Tetramer of two alpha and two beta subunits.

The protein resides in the cytoplasm. It carries out the reaction tRNA(Gly) + glycine + ATP = glycyl-tRNA(Gly) + AMP + diphosphate. In Moraxella catarrhalis (Branhamella catarrhalis), this protein is Glycine--tRNA ligase alpha subunit (glyQ).